The primary structure comprises 587 residues: Adenine deaminase (587 aa).

This sequence belongs to the metallo-dependent hydrolases superfamily. Adenine deaminase family. The cofactor is Mn(2+).

It catalyses the reaction adenine + H2O + H(+) = hypoxanthine + NH4(+). In Shewanella halifaxensis (strain HAW-EB4), this protein is Adenine deaminase.